The following is a 321-amino-acid chain: Ribose-phosphate pyrophosphokinase (321 aa).

ATP is bound by residues 44–46 and 103–104; these read DGE and RQ. Mg(2+) contacts are provided by His137 and Asp179. The active site involves Lys202. D-ribose 5-phosphate is bound by residues Arg204, Asp228, and 232 to 236; that span reads DTAGT.

The protein belongs to the ribose-phosphate pyrophosphokinase family. Class I subfamily. Homohexamer. Mg(2+) serves as cofactor.

Its subcellular location is the cytoplasm. The catalysed reaction is D-ribose 5-phosphate + ATP = 5-phospho-alpha-D-ribose 1-diphosphate + AMP + H(+). It functions in the pathway metabolic intermediate biosynthesis; 5-phospho-alpha-D-ribose 1-diphosphate biosynthesis; 5-phospho-alpha-D-ribose 1-diphosphate from D-ribose 5-phosphate (route I): step 1/1. Involved in the biosynthesis of the central metabolite phospho-alpha-D-ribosyl-1-pyrophosphate (PRPP) via the transfer of pyrophosphoryl group from ATP to 1-hydroxyl of ribose-5-phosphate (Rib-5-P). This is Ribose-phosphate pyrophosphokinase from Staphylococcus haemolyticus (strain JCSC1435).